A 130-amino-acid chain; its full sequence is uncharacterized protein (130 aa).

This is an uncharacterized protein from Pasteurella multocida (strain Pm70).